The chain runs to 672 residues: tRNA 5-methylaminomethyl-2-thiouridine biosynthesis bifunctional protein MnmC (672 aa).

A tRNA (mnm(5)s(2)U34)-methyltransferase region spans residues M1 to A241. Residues I269 to G672 are FAD-dependent cmnm(5)s(2)U34 oxidoreductase.

This sequence in the N-terminal section; belongs to the methyltransferase superfamily. tRNA (mnm(5)s(2)U34)-methyltransferase family. In the C-terminal section; belongs to the DAO family. FAD is required as a cofactor.

It localises to the cytoplasm. It catalyses the reaction 5-aminomethyl-2-thiouridine(34) in tRNA + S-adenosyl-L-methionine = 5-methylaminomethyl-2-thiouridine(34) in tRNA + S-adenosyl-L-homocysteine + H(+). Catalyzes the last two steps in the biosynthesis of 5-methylaminomethyl-2-thiouridine (mnm(5)s(2)U) at the wobble position (U34) in tRNA. Catalyzes the FAD-dependent demodification of cmnm(5)s(2)U34 to nm(5)s(2)U34, followed by the transfer of a methyl group from S-adenosyl-L-methionine to nm(5)s(2)U34, to form mnm(5)s(2)U34. The chain is tRNA 5-methylaminomethyl-2-thiouridine biosynthesis bifunctional protein MnmC from Pasteurella multocida (strain Pm70).